Here is a 424-residue protein sequence, read N- to C-terminus: Histidine--tRNA ligase (424 aa).

Belongs to the class-II aminoacyl-tRNA synthetase family. In terms of assembly, homodimer.

It localises to the cytoplasm. The enzyme catalyses tRNA(His) + L-histidine + ATP = L-histidyl-tRNA(His) + AMP + diphosphate + H(+). This Shewanella sediminis (strain HAW-EB3) protein is Histidine--tRNA ligase.